Reading from the N-terminus, the 147-residue chain is MTRKKFYLVREDMLTEAMQKTLEAKALLESGKKRKINEAVHEVGLSRSAFYKYKDGVFPFHTMTKEKIITLSINLEDRSGSLSAMLATVAEAEANVLTINQTIPLQGRANITLSIDTATMSLEIDELVEKIESMEAVEKVELVGSGS.

The region spanning 70–145 is the ACT domain; the sequence is TLSINLEDRS…AVEKVELVGS (76 aa).

It belongs to the UPF0735 family.

This chain is UPF0735 ACT domain-containing protein BH1214, found in Halalkalibacterium halodurans (strain ATCC BAA-125 / DSM 18197 / FERM 7344 / JCM 9153 / C-125) (Bacillus halodurans).